Here is a 465-residue protein sequence, read N- to C-terminus: Ribulose bisphosphate carboxylase large chain (465 aa).

K4 is modified (N6,N6,N6-trimethyllysine). 2 residues coordinate substrate: N113 and T163. Catalysis depends on K165, which acts as the Proton acceptor. A substrate-binding site is contributed by K167. K191, D193, and E194 together coordinate Mg(2+). At K191 the chain carries N6-carboxylysine. The Proton acceptor role is filled by H284. Substrate-binding residues include R285, H317, and S369.

This sequence belongs to the RuBisCO large chain family. Type I subfamily. As to quaternary structure, heterohexadecamer of 8 large chains and 8 small chains; disulfide-linked. The disulfide link is formed within the large subunit homodimers. The cofactor is Mg(2+). The disulfide bond which can form in the large chain dimeric partners within the hexadecamer appears to be associated with oxidative stress and protein turnover.

The protein localises to the plastid. It localises to the chloroplast. The enzyme catalyses 2 (2R)-3-phosphoglycerate + 2 H(+) = D-ribulose 1,5-bisphosphate + CO2 + H2O. It catalyses the reaction D-ribulose 1,5-bisphosphate + O2 = 2-phosphoglycolate + (2R)-3-phosphoglycerate + 2 H(+). RuBisCO catalyzes two reactions: the carboxylation of D-ribulose 1,5-bisphosphate, the primary event in carbon dioxide fixation, as well as the oxidative fragmentation of the pentose substrate in the photorespiration process. Both reactions occur simultaneously and in competition at the same active site. The polypeptide is Ribulose bisphosphate carboxylase large chain (Cornus oblonga).